The following is a 208-amino-acid chain: Uracil phosphoribosyltransferase (208 aa).

Residues Arg-78, Arg-103, and 130 to 138 (DPMLATGGS) each bind 5-phospho-alpha-D-ribose 1-diphosphate. Uracil is bound by residues Ile-193 and 198-200 (GDA). Asp-199 is a binding site for 5-phospho-alpha-D-ribose 1-diphosphate.

The protein belongs to the UPRTase family. It depends on Mg(2+) as a cofactor.

It carries out the reaction UMP + diphosphate = 5-phospho-alpha-D-ribose 1-diphosphate + uracil. It functions in the pathway pyrimidine metabolism; UMP biosynthesis via salvage pathway; UMP from uracil: step 1/1. Allosterically activated by GTP. Functionally, catalyzes the conversion of uracil and 5-phospho-alpha-D-ribose 1-diphosphate (PRPP) to UMP and diphosphate. This Neisseria meningitidis serogroup A / serotype 4A (strain DSM 15465 / Z2491) protein is Uracil phosphoribosyltransferase.